A 140-amino-acid polypeptide reads, in one-letter code: Large ribosomal subunit protein uL14 (140 aa).

This sequence belongs to the universal ribosomal protein uL14 family.

In Aedes aegypti (Yellowfever mosquito), this protein is Large ribosomal subunit protein uL14 (RpL23-A).